Reading from the N-terminus, the 532-residue chain is Eukaryotic translation initiation factor 3 subunit D (532 aa).

Residues 108–161 (ATVLKTRGGAPRGGSFAGRGGSQRGGRFQNQPGRGPVGGQRGPNPRFGKSKFGW) form a disordered region. Positions 117–131 (APRGGSFAGRGGSQR) are enriched in gly residues. The segment covering 132–141 (GGRFQNQPGR) has biased composition (low complexity). Residues 296-310 (PLDFITVDENAADPP) are RNA gate.

This sequence belongs to the eIF-3 subunit D family. Component of the eukaryotic translation initiation factor 3 (eIF-3) complex.

It is found in the cytoplasm. Functionally, mRNA cap-binding component of the eukaryotic translation initiation factor 3 (eIF-3) complex, which is involved in protein synthesis of a specialized repertoire of mRNAs and, together with other initiation factors, stimulates binding of mRNA and methionyl-tRNAi to the 40S ribosome. The eIF-3 complex specifically targets and initiates translation of a subset of mRNAs involved in cell proliferation. In the eIF-3 complex, eif3d specifically recognizes and binds the 7-methylguanosine cap of a subset of mRNAs. In Yarrowia lipolytica (strain CLIB 122 / E 150) (Yeast), this protein is Eukaryotic translation initiation factor 3 subunit D.